The sequence spans 338 residues: Terpene synthase 1 (338 aa).

The DDxx(x)D/E motif motif lies at 80–85 (DDALDS). An NDxxSxxxD/E motif motif is present at residues 220-228 (NDLVSYEKE).

This sequence belongs to the terpene synthase family.

The enzyme catalyses (2E,6E)-farnesyl diphosphate = (2S,3R,6S,9S)-(-)-protoillud-7-ene + diphosphate. Terpene synthase that converts its substrate farnesyl diphosphate (FPP) into the sesquiterpene protoillud-7-ene. The sequence is that of Terpene synthase 1 from Cavenderia fasciculata (Slime mold).